The primary structure comprises 315 residues: Small ribosomal subunit protein uS3 (315 aa).

A KH type-2 domain is found at 38 to 106; sequence IRKMMSRGME…QVQLNILEVK (69 aa). The disordered stretch occupies residues 211–315; sequence AEREAQEALQ…VANTPEKAEE (105 aa). Residues 222-232 show a composition bias toward basic residues; the sequence is QTRRERPRRGP. Over residues 265 to 315 the composition is skewed to low complexity; sequence APAETPAGEAAATEPTAPVAEPATAAASAPAEAASAPAEAAVANTPEKAEE.

Belongs to the universal ribosomal protein uS3 family. Part of the 30S ribosomal subunit. Forms a tight complex with proteins S10 and S14.

Its function is as follows. Binds the lower part of the 30S subunit head. Binds mRNA in the 70S ribosome, positioning it for translation. The protein is Small ribosomal subunit protein uS3 of Frankia casuarinae (strain DSM 45818 / CECT 9043 / HFP020203 / CcI3).